Here is a 512-residue protein sequence, read N- to C-terminus: Glutamyl-tRNA(Gln) amidotransferase subunit A (512 aa).

Residues lysine 82 and serine 157 each act as charge relay system in the active site. The active-site Acyl-ester intermediate is the serine 181.

This sequence belongs to the amidase family. GatA subfamily. Heterotrimer of A, B and C subunits.

The catalysed reaction is L-glutamyl-tRNA(Gln) + L-glutamine + ATP + H2O = L-glutaminyl-tRNA(Gln) + L-glutamate + ADP + phosphate + H(+). Allows the formation of correctly charged Gln-tRNA(Gln) through the transamidation of misacylated Glu-tRNA(Gln) in organisms which lack glutaminyl-tRNA synthetase. The reaction takes place in the presence of glutamine and ATP through an activated gamma-phospho-Glu-tRNA(Gln). In Bordetella bronchiseptica (strain ATCC BAA-588 / NCTC 13252 / RB50) (Alcaligenes bronchisepticus), this protein is Glutamyl-tRNA(Gln) amidotransferase subunit A.